The chain runs to 352 residues: Ly6/PLAUR domain-containing protein 3 (352 aa).

The first 32 residues, 1-32 (MDAARRGDTQPVMWTTRWLLLLPLLLCEGAQA), serve as a signal peptide directing secretion. The region spanning 35 to 128 (CYSCVQKADD…LNLTLRGLNP (94 aa)) is the UPAR/Ly6 1 domain. N-linked (GlcNAc...) asparagine glycosylation is found at Asn-120, Asn-131, Asn-178, and Asn-185. The UPAR/Ly6 2 domain maps to 142-224 (CYSCMGLSRE…GSCCQGPRCN (83 aa)). Residues 236–249 (RIPPLVLLPPPTTP) show a composition bias toward pro residues. Residues 236 to 330 (RIPPLVLLPP…KGGAQIPSKG (95 aa)) are disordered. Positions 250–285 (APSTRTQNSSSTTSTTAPTTATTTIKPTTVQASHTS) are enriched in low complexity. Composition is skewed to basic and acidic residues over residues 286–300 (STHE…EEGS) and 309–320 (HQDRSNMGKFPE). Gly-330 is lipidated: GPI-anchor amidated glycine. The propeptide at 331–352 (GSDALGSWLSAILLTVVAGAML) is removed in mature form.

As to quaternary structure, interacts with AGR2 and AGR3. Binds laminin-1 and laminin-5. Interacts with LGALS3. In terms of tissue distribution, found predominantly on the basal layers of squamous epithelium. Expressed in the gravid uterus and on epithelial of the upper gastrointestinal tract. It has been found in tumor lines which metastasize via the lymphatic system.

The protein resides in the cell membrane. In terms of biological role, supports cell migration. May be involved in tumor progression. This is Ly6/PLAUR domain-containing protein 3 (Lypd3) from Rattus norvegicus (Rat).